The primary structure comprises 4138 residues: MSPTTQHEPGSPRVPEPIAIVGSACRFPGGSSSPSKLWDLLREPRDVLRELPPERLNLNRYYHPDGERHGSTNVANRAYVLDEDVARFDAGFFGISPLEAAGMDPQQRLLLEVVHEATEAAGIPLAQLRGSPTSVHVGVMTNDWSHLQRRDPETMPRHTATGAAASIIANRVSYVFDLRGASETIDTACSSSLVALHSAARALRAGDCTRAVVAGVNLILDPDPFVFEAKLGMLSPGSRSRMWDKEADGYARGEGVAAVVLKTLRDALRDGDEVAGVVRATGVNSDGTGGGGGLTMPSAEAQTALIRRTYEEAGLDPVADRPQFFECHGTGTKAGDPVEARAISEAFVKGHRGEEGVPTVKQPLYVGSIKTVVGHLEGCAGLAGVIKVLLSLKHGVIPPNLLFNELNPDIAQYYGPLNIPTKAKPWPKLAPGVPLRASVNSFGFGGTNAHAIIERYDATQSYVVALKAGIPHLSRPITHRDSSDVSIPAPILLSARTGGALWRTVDAYARHLRQHPELSLADLSRFLHERRSTHRVRAHFSGASREALLDSMDAFVRTHAADAKSAATQGRIGHAPLLIDPKETPGVLGVFTGQGAQWPAMGRDMMRASPLFRRTIAECEGVLRALPGDDAPEWSLAEELTKEAPASRLAEAAIAQPLCTAVQLALVGALRAAGLRFDAVVGHSSGEIAATYAAGIITLQGAMQIAYYRGFHAKLARGPAGEAGGMLAVGLSPAEARELCARPEFTGRLQVAACNAPKSVTLSGDKEVVAAAREMLVAQGAFARELRVDTAYHSHHMLPCAAPYLESIRKCDVQVSRPTPGTCQWSSSVRGDAELLRADRSLEDLKGPYWVANMVQTVQFSRALEASIWHGGPFDLAVEVGPHPALKGPTEQTLKGVYGSVPFYTGVLKRDAPDAVSFSTAIGSVWAHLGPDFVDVPGYCRSVFSETGHDQEGPVTFVPDLPAYAWDHEETHWRESRISKRYRTGRDGYHELLGRRAVDDNEREVRWRNLLAVRDLPWTRGHTILGEVLLPGAAYVSMALEAGRRLAEDRGREARLLEVSEVDILRPVVVADGKDATETLFTVRILKEDLSTDYKSGGGLIKASFSFCVYSSASSTAIAHTCEGLIDVHLGPRLGSESEDEGSVPQLPQRQAPAPNLQEIDCEKLYAQFGTIGLEYSGIFRRMTSSRRHLGHATASASWAAADLGDAYMVHPAVLDVAFQTIFVAHAHPDSGQVNAALLPSRIERVRVAPSPAMQRIDGILSAEVDSWILHQTATSVTGNLDVHDADTGAPLLQVEGFEVRSVGERDAAADRLIFAETAWGPDVSVAGGLSDPIRDEAADATVKGLAEASERVSLFYARRLMAELSAEDRARASWYHERLLQALDHHLERLKGGVHPHLRAEWLADDDEVVRAIDAAFPKTVELQMLHAVGRNMASVVRGEKHMLEVMRVDNMLDRFYAEDKGMQQVNIFLANAVKEISFKFPRCKILEIGAGTGATTSAVLHALDDAFDTYTYTDLSVGFFETAMERFADSRHKMVFAALDVEKDLASQPGFAPHSYDLIIAANVLHATRDMAVTLRNVRALLRPGGYLVLNEHTGAGSLCATFNFGGLEGWWLAEEEDRRRSPLLSTARWDAQLRRAGFSGADHVAHDIPEGGEGGRQISLIVSQAVDERFWARVSPLSEMAELQEQEEEEMPLLLIGGKMTATARIFKEVRKLLPRRWRERVRLVDCVDSLDVEALPARCDVICLQELDAALFATPMTPRRLQILQTLLMNTANLLWVTHAQTSGSATPRAAMFRGITRVMAGEIPQINTQVIGVEPATVPSSTARHLLEAFLRLQSEHTRIATNSDGDDAQQSALWSHEPEIDILPDGTVMIPRVRLNRSLNETYNASSRTVAKTVDASCVPVQAVAGPTKMQLQPADEQTSLANGTDSTVRVKVEFTLHVPQAPDGTNLYLVCGWTLPTEAPDGTPNAVLAVSTVNASIIEVPSASAAVVADDDMQPDLLLRIFDHLAAQAVQVQLNPTGEHKARALIYGADERLAQLISTQSTFRDNKVYFASSQRWVPDDWIKVHPLSSKFALSQALPYGVQVFIDCLGTGESVDGRKMIVSCLPAARRVRRLDASLLLELPQFSAALASAYSHAKSVTCPDAGEPSRVDRFHATELAGRPSNSFASSVYITSWQDLGAVQVATPPLETQGMFRSDRTYLMVGAAGGVGTSICRWMVRNGARHVVVTSRTPTADPVMLAEAAHHGADVRVLPMDVCDRLAVHALVDTIRATMPPIAGVCNAAMVLRDKLFLDMDVDILNDTLGPKVDGTETLDALFSDDAALDFFVLLGSAATVASNAGQANYHCANLYMDALVRRRRARGLAASIIHVGFVCETGYVARLVDEARALTQRDAMRVTTLSETDVHHAFAQAVRGGRPGRSGGSHSIVMGIEPPSKALEAGRSLEAVRRKALWLSDPRFGHMVPYSTAASQTAVEQSAAADASAGGGSVGQQVAEASTEEEAAAAVRRAFSAKLEGILLLPPSSIGEDGAGRPVTDLGIDSLVAVEIRTWFLKQLRVDVPVMKILGGSTIGQLSTLAAKLARQQSPRKEGQMAGKEQGLPSPETQDKLVDDKEQKVQVTSSLAKADSLTQEMQASAHSHSDSATNPTPSSTASEADDSNSQSTRSTSTEPKTEDKVSAHVQLEPATADHHPKILREAPMSAAQARIWFLAEHMAEPDAYNMVFHYRVRGPLHLARLRRALHAVAAHHECLRMSFRADPHTGQPMQGLLACSAFQMTIRDEGDVEEELRRLRTRAWRLELGETLEIVALPGGELLFGYHHIVMDGIGWAVVLADLDRAYRMLPLDKAAAGSHVEFSEAQRQQEREGALDEPLAFWQAEFETIPEPLPQLSVSSPQRSVAAAGTHRVLRELPPARGAAIRAAGRQLRVSPFHLHLAVLQVVLARLAGIEDVCVGIVDANRGDARAARMVGCFVNMLPVRNQVRPGASLAEVARGAASKALAAFANGAAPLDRILDRVQAPRPVGGTPLFQAALNYRPASALMHEAPLGAECRMELVPGDIKDADNPFEVSVLLSELPGGGLGVEMFCQKAVYNIDGSEALLDAYVNVLGDFMTDASQRVRECAVYRQADVDEALTLGKGPEIKFGWPATLSERVMNICQKNSARTAIKDGSMTLSYASLASKVNDVASAIVSAGSGVGSRIAVLCEPSVDAIVAMLAILHIGAVYVPLDISLPEARHVALVSNCTPSLIVCHKATLERTHRLSTPGYESAQELVIDDLPPSSKQIDSAPLRAQPDAPAILLYTSGTTGTPKGVLLTQANFANHIALKSAHLGLDRDEVILQQSSLGFDMSLVQIFCALGNGGCLVIVPPDARRDPVELTSIVQQHEVSLTIATPSEYLAWLQYGSGCLAQATAWRHLCMGGEPISQLLKDELRRLGRKNLKVTNCYGPTETTAAVSFQLIDLESDSCSSQLGSEVSRYAVGKPLANYSIRIMDPVGAWLPVNHTGEIVTGGAGVALGYLGLSEETRAKFVQVDGEPGRFYRTGDTGRLLPDGTLLCFGRIEGDSQVKLRGLRIELQEVEAAILQASEGLLQAAGVSCRGDMLVAHCTLSPGKESTETDKTALLRRLSEVLPQFAVPAAIHIVPSLPNNSNGKLDRKAIAALPLPTSDCAAHASSSEKMTIQEGELRLLWERVLPRDAAGSRITPASDFFLRGGNSLLLMKLQAAIRDAMDVRVPTRALYQASTLSGMTRCVLAQRERQRRDEPPAEDIDWAAEVAVPPELLARADELNSSAAAASLRPRKTTGGLEILLTGATGFLGGQLLRHLLRSPAVSRIHCVAVPADEREHLEAGSEANGSSGKVACHTGNLAAADLGLAAAQRARLAQSVDVIVHAGAAGHCLNTYATLSAPNLSSTKSLAALALARSPPIPLFFASSNRVVLLTGETAPASPSSVASSLPPADGAQGYTASKWASEVFLESLTNAVTSPWRVSIHRPCALVGDGVPNTDALNVILRYAVEMRCVPSLPRERARGYLDFGTVDAVVAEMAADVLALADEEEGGAGVRYRHHSGGVKVPIHEFRAHMDKKYGERFESVDLAAWIPRAVEAGMDPLISAYLETFLETDEPLIFPYMGGKSD.

Residues 15 to 455 (PEPIAIVGSA…GTNAHAIIER (441 aa)) form the Ketosynthase family 3 (KS3) domain. Active-site for beta-ketoacyl synthase activity residues include Cys189, His328, and His375. The interval 590 to 921 (VFTGQGAQWP…APDAVSFSTA (332 aa)) is malonyl-CoA:ACP transacylase (MAT) domain. The tract at residues 990–1133 (HELLGRRAVD…GLIDVHLGPR (144 aa)) is N-terminal hotdog fold. Residues 990 to 1306 (HELLGRRAVD…GFEVRSVGER (317 aa)) form a dehydratase (DH) domain region. Residues 990–1309 (HELLGRRAVD…VRSVGERDAA (320 aa)) form the PKS/mFAS DH domain. The Proton acceptor; for dehydratase activity role is filled by His1022. The segment at 1157-1309 (LQEIDCEKLY…VRSVGERDAA (153 aa)) is C-terminal hotdog fold. Asp1216 acts as the Proton donor; for dehydratase activity in catalysis. Positions 1456–1650 (RFYAEDKGMQ…FSGADHVAHD (195 aa)) are methyltransferase (MT) domain. A ketoreductase (KR) domain region spans residues 2205–2379 (TYLMVGAAGG…AASIIHVGFV (175 aa)). In terms of domain architecture, Carrier 1 spans 2507–2587 (EAAAAVRRAF…QLSTLAAKLA (81 aa)). O-(pantetheine 4'-phosphoryl)serine is present on Ser2547. The interval 2587-2683 (ARQQSPRKEG…TEPKTEDKVS (97 aa)) is disordered. Residues 2610-2621 (TQDKLVDDKEQK) show a composition bias toward basic and acidic residues. A compositionally biased stretch (polar residues) spans 2622-2643 (VQVTSSLAKADSLTQEMQASAH). The span at 2647–2659 (DSATNPTPSSTAS) shows a compositional bias: low complexity. The span at 2664 to 2675 (SNSQSTRSTSTE) shows a compositional bias: polar residues. A condensation (C) domain region spans residues 2701 to 3128 (REAPMSAAQA…ASQRVRECAV (428 aa)). The tract at residues 3162–3564 (CQKNSARTAI…DGTLLCFGRI (403 aa)) is adenylation (A) (KR) domain. One can recognise a Carrier 2 domain in the interval 3680–3759 (EKMTIQEGEL…GMTRCVLAQR (80 aa)). Ser3719 carries the post-translational modification O-(pantetheine 4'-phosphoryl)serine. Residues 3813 to 4045 (LTGATGFLGG…LDFGTVDAVV (233 aa)) form a reductase (RED) domain region.

This sequence in the C-terminal section; belongs to the NRP synthetase family.

Its function is as follows. Hybrid PKS-NRPS synthetase; part of the gene cluster that mediates the biosynthesis of fumosorinone, a 2-pyridone alkaloid that acts as an inhibitor of protein tyrosine phosphatase 1B which is implicated asa negative regulator of insulin receptor signaling and a potential drug target for the treatment of type II diabetes and other associated metabolic syndromes. The polyketide-amino acid backbone of fumosorinone is first assembled by the PKS-NRPS hybrid fumoS. The PKS modules condense one acetyl-CoA starter unit with 7 malonyl-CoA units, programmed C-methylations occurring after the first 3 and the sixth extensions, and cycles of full reduction occurring after the first 2 extensions. Because fumoS lacks a designated enoyl reductase (ER) domain, the required activity is provided the enoyl reductase fumoC. Upon formation of the polyketide backbone on the thiotemplate, the polyketide is transferred to the NRPS module and linked to tyrosine to produce the acyltetramic acid intermediate called prefumosorinone A. The cytochrome P450 monooxygenase fumoA then probably catalyzes an unprecedented oxidative ring expansion of prefumosorinone A to form prefumosorinone B which contains the 2-pyridone core of fumosorinone. The cytochrome P450 monooxygenase fumoB might hydroxylate the nitrogen of prefumosorinone B, but not the acyltetramic acid prefumosorinone A, to form fumosorinone. The protein is Fumosorinone synthetase of Cordyceps fumosorosea (strain ARSEF 2679) (Isaria fumosorosea).